The primary structure comprises 267 residues: Undecaprenyl-diphosphatase (267 aa).

A run of 7 helical transmembrane segments spans residues 1–21 (MTLF…FLPV), 49–69 (VGTL…AVAG), 83–103 (AFLA…GLAL), 111–131 (ALRS…VLYW), 190–210 (MLMS…EVAA), 219–239 (DAAI…TLMM), and 245–265 (VSFT…LIIA).

Belongs to the UppP family.

The protein resides in the cell inner membrane. It catalyses the reaction di-trans,octa-cis-undecaprenyl diphosphate + H2O = di-trans,octa-cis-undecaprenyl phosphate + phosphate + H(+). Catalyzes the dephosphorylation of undecaprenyl diphosphate (UPP). Confers resistance to bacitracin. This is Undecaprenyl-diphosphatase from Dinoroseobacter shibae (strain DSM 16493 / NCIMB 14021 / DFL 12).